A 44-amino-acid chain; its full sequence is Diuretic hormone (44 aa).

V44 is subject to Valine amide.

The protein localises to the secreted. In terms of biological role, regulation of fluid secretion. Stimulates primary urine secretion by Malpighian tubules and causes a dose-dependent stimulation of cAMP levels in the tubules. May act as clearance peptide in that it may remove metabolic waste from the hemolymph. The protein is Diuretic hormone of Stomoxys calcitrans (Stable fly).